Consider the following 313-residue polypeptide: Ester hydrolase C11orf54 homolog (313 aa).

The Zn(2+) site is built by H264, H266, and H276.

In terms of assembly, monomer. Requires Zn(2+) as cofactor.

It is found in the nucleus. The protein resides in the cytoplasm. Its function is as follows. Exhibits ester hydrolase activity on the substrate p-nitrophenyl acetate, in vitro. May regulate DNA damage and repair by regulating HIF1A degradation via chaperone-mediated autophagy (CMA). This Xenopus tropicalis (Western clawed frog) protein is Ester hydrolase C11orf54 homolog.